A 405-amino-acid chain; its full sequence is Multidrug resistance protein MdtA (405 aa).

A signal peptide spans 1-22; the sequence is MKTPRRFPLIALTVAAVLTAAA. Over residues 35–52 the composition is skewed to polar residues; sequence VQNRQGTEQQRASNSQGS. The interval 35–62 is disordered; it reads VQNRQGTEQQRASNSQGSAKRAGNAPPV.

The protein belongs to the membrane fusion protein (MFP) (TC 8.A.1) family. As to quaternary structure, part of a tripartite efflux system composed of MdtA, MdtB and MdtC.

It localises to the cell inner membrane. The chain is Multidrug resistance protein MdtA from Erwinia amylovora (strain ATCC 49946 / CCPPB 0273 / Ea273 / 27-3).